The following is an 86-amino-acid chain: YcgL domain-containing protein Smlt4554 (86 aa).

A YcgL domain is found at 1–85 (MHAYVYKSQL…SVASLMPRHY (85 aa)).

The protein is YcgL domain-containing protein Smlt4554 of Stenotrophomonas maltophilia (strain K279a).